The primary structure comprises 489 residues: Glutamyl-tRNA(Gln) amidotransferase subunit A (489 aa).

Catalysis depends on charge relay system residues Lys79 and Ser158. Ser182 functions as the Acyl-ester intermediate in the catalytic mechanism.

It belongs to the amidase family. GatA subfamily. Heterotrimer of A, B and C subunits.

It carries out the reaction L-glutamyl-tRNA(Gln) + L-glutamine + ATP + H2O = L-glutaminyl-tRNA(Gln) + L-glutamate + ADP + phosphate + H(+). Functionally, allows the formation of correctly charged Gln-tRNA(Gln) through the transamidation of misacylated Glu-tRNA(Gln) in organisms which lack glutaminyl-tRNA synthetase. The reaction takes place in the presence of glutamine and ATP through an activated gamma-phospho-Glu-tRNA(Gln). This Anaplasma marginale (strain Florida) protein is Glutamyl-tRNA(Gln) amidotransferase subunit A.